The following is a 113-amino-acid chain: Dolichyl-diphosphooligosaccharide--protein glycosyltransferase subunit DAD1 (113 aa).

S2 carries the N-acetylserine modification. At 2–30 (SASVLSVISRFLEEYLSSTPQRLKLLDAY) the chain is on the cytoplasmic side. A helical transmembrane segment spans residues 31 to 51 (LLYILLTGALQFGYCLLVGTF). P52 is a topological domain (lumenal). Residues 53–73 (FNSFLSGFISCVGSFILAVCL) form a helical membrane-spanning segment. The Cytoplasmic portion of the chain corresponds to 74 to 92 (RIQINPQNKADFQGISPER). The helical transmembrane segment at 93–113 (AFADFLFASTILHLVVMNFVG) threads the bilayer.

It belongs to the DAD/OST2 family. Component of the oligosaccharyltransferase (OST) complex. OST exists in two different complex forms which contain common core subunits RPN1, RPN2, OST48, OST4, DAD1 and TMEM258, either STT3A or STT3B as catalytic subunits, and form-specific accessory subunits. STT3A complex assembly occurs through the formation of 3 subcomplexes. Subcomplex 1 contains RPN1 and TMEM258, subcomplex 2 contains the STT3A-specific subunits STT3A, DC2/OSTC, and KCP2 as well as the core subunit OST4, and subcomplex 3 contains RPN2, DAD1, and OST48. The STT3A complex can form stable complexes with the Sec61 complex or with both the Sec61 and TRAP complexes.

The protein resides in the endoplasmic reticulum membrane. Its pathway is protein modification; protein glycosylation. In terms of biological role, subunit of the oligosaccharyl transferase (OST) complex that catalyzes the initial transfer of a defined glycan (Glc(3)Man(9)GlcNAc(2) in eukaryotes) from the lipid carrier dolichol-pyrophosphate to an asparagine residue within an Asn-X-Ser/Thr consensus motif in nascent polypeptide chains, the first step in protein N-glycosylation. N-glycosylation occurs cotranslationally and the complex associates with the Sec61 complex at the channel-forming translocon complex that mediates protein translocation across the endoplasmic reticulum (ER). All subunits are required for a maximal enzyme activity. This chain is Dolichyl-diphosphooligosaccharide--protein glycosyltransferase subunit DAD1, found in Sus scrofa (Pig).